Here is a 157-residue protein sequence, read N- to C-terminus: Small ribosomal subunit protein uS7 (157 aa).

This sequence belongs to the universal ribosomal protein uS7 family. As to quaternary structure, part of the 30S ribosomal subunit. Contacts proteins S9 and S11.

Functionally, one of the primary rRNA binding proteins, it binds directly to 16S rRNA where it nucleates assembly of the head domain of the 30S subunit. Is located at the subunit interface close to the decoding center, probably blocks exit of the E-site tRNA. This chain is Small ribosomal subunit protein uS7, found in Bdellovibrio bacteriovorus (strain ATCC 15356 / DSM 50701 / NCIMB 9529 / HD100).